The chain runs to 190 residues: Protein GrpE (190 aa).

The interval 21–49 (DDLQEEVEATETEETVEEVIEETPEKSEL) is disordered. Over residues 23–42 (LQEEVEATETEETVEEVIEE) the composition is skewed to acidic residues.

This sequence belongs to the GrpE family. As to quaternary structure, homodimer.

The protein localises to the cytoplasm. Participates actively in the response to hyperosmotic and heat shock by preventing the aggregation of stress-denatured proteins, in association with DnaK and GrpE. It is the nucleotide exchange factor for DnaK and may function as a thermosensor. Unfolded proteins bind initially to DnaJ; upon interaction with the DnaJ-bound protein, DnaK hydrolyzes its bound ATP, resulting in the formation of a stable complex. GrpE releases ADP from DnaK; ATP binding to DnaK triggers the release of the substrate protein, thus completing the reaction cycle. Several rounds of ATP-dependent interactions between DnaJ, DnaK and GrpE are required for fully efficient folding. In Streptococcus pyogenes serotype M3 (strain SSI-1), this protein is Protein GrpE.